Here is a 470-residue protein sequence, read N- to C-terminus: Argininosuccinate lyase (470 aa).

Belongs to the lyase 1 family. Argininosuccinate lyase subfamily.

The protein resides in the cytoplasm. The enzyme catalyses 2-(N(omega)-L-arginino)succinate = fumarate + L-arginine. Its pathway is amino-acid biosynthesis; L-arginine biosynthesis; L-arginine from L-ornithine and carbamoyl phosphate: step 3/3. The protein is Argininosuccinate lyase of Leptospira interrogans serogroup Icterohaemorrhagiae serovar copenhageni (strain Fiocruz L1-130).